The following is a 198-amino-acid chain: Type II secretion system protein J (198 aa).

Residues 1–7 constitute a propeptide, leader sequence; the sequence is MIRRSSG. The residue at position 8 (F8) is an N-methylphenylalanine. Residues 8–28 form a helical membrane-spanning segment; that stretch reads FTLVEMLLALAILAALSVAAV.

The protein belongs to the GSP J family. Type II secretion is composed of four main components: the outer membrane complex, the inner membrane complex, the cytoplasmic secretion ATPase and the periplasm-spanning pseudopilus. Interacts with core component PulG. Cleaved by prepilin peptidase. In terms of processing, methylated by prepilin peptidase at the amino group of the N-terminal phenylalanine once the leader sequence is cleaved by prepilin peptidase.

The protein localises to the cell inner membrane. Functionally, component of the type II secretion system required for the energy-dependent secretion of extracellular factors such as proteases and toxins from the periplasm. Part of the pseudopilus tip complex that is critical for the recognition and binding of secretion substrates. This chain is Type II secretion system protein J (pulJ), found in Klebsiella pneumoniae.